Reading from the N-terminus, the 460-residue chain is Hydroxymethylglutaryl-CoA synthase erg13B (460 aa).

E86 functions as the Proton donor/acceptor in the catalytic mechanism. Residue C120 is the Acyl-thioester intermediate of the active site. (3S)-3-hydroxy-3-methylglutaryl-CoA-binding residues include C120, T162, S212, H263, K272, N340, and S374. Residue H263 is the Proton donor/acceptor of the active site.

Belongs to the thiolase-like superfamily. HMG-CoA synthase family.

The catalysed reaction is acetoacetyl-CoA + acetyl-CoA + H2O = (3S)-3-hydroxy-3-methylglutaryl-CoA + CoA + H(+). It functions in the pathway metabolic intermediate biosynthesis; (R)-mevalonate biosynthesis; (R)-mevalonate from acetyl-CoA: step 2/3. Hydroxymethylglutaryl-CoA synthase; part of the first module of ergosterol biosynthesis pathway that includes the early steps of the pathway, conserved across all eukaryotes, and which results in the formation of mevalonate from acetyl-coenzyme A (acetyl-CoA). Erg13A and erg13B condense acetyl-CoA with acetoacetyl-CoA to form hydroxymethylglutaryl-CoA (HMG-CoA). The first module starts with the action of the cytosolic acetyl-CoA acetyltransferase erg10B that catalyzes the formation of acetoacetyl-CoA. The hydroxymethylglutaryl-CoA synthases erg13A and erg13B then condense acetyl-CoA with acetoacetyl-CoA to form HMG-CoA. The rate-limiting step of the early module is the reduction to mevalonate by the 3-hydroxy-3-methylglutaryl-coenzyme A (HMG-CoA) reductases hmg1 and hmg2. Mevalonate is also a precursor for the extracellular siderophore triacetylfusarinine C (TAFC). The protein is Hydroxymethylglutaryl-CoA synthase erg13B of Aspergillus fumigatus (strain ATCC MYA-4609 / CBS 101355 / FGSC A1100 / Af293) (Neosartorya fumigata).